Consider the following 3133-residue polypeptide: Cysteine repeat modular protein A (3133 aa).

The segment at 1 to 39 (MDSASTSMSRVHPSGVYRRPLLPSGGPRSTSERDERVDL) is disordered. Residues 30–39 (TSERDERVDL) show a composition bias toward basic and acidic residues. A helical membrane pass occupies residues 123–143 (LFLLFSSSPLLLLLLLHQFFI). Basic and acidic residues-rich tracts occupy residues 173 to 211 (TFEEREADSHRGSRDGEKVSGSRDIRFEEQEIRSRDGKE) and 301 to 311 (NESEKAERARL). Disordered regions lie at residues 173-234 (TFEE…EGRR) and 294-317 (VSPSHSGNESEKAERARLEQSTPA). 3 N-linked (GlcNAc...) asparagine glycosylation sites follow: Asn-301, Asn-392, and Asn-470. Positions 577-644 (DETLEQGKLY…DPHVRFDFCD (68 aa)) constitute a Kringle domain. 2 disulfides stabilise this stretch: Cys-599-Cys-631 and Cys-620-Cys-643. N-linked (GlcNAc...) asparagine glycans are attached at residues Asn-1364 and Asn-1532. A run of 3 helical transmembrane segments spans residues 2229–2249 (MVWNIVCLMGYYLATLLFNIV), 2276–2296 (LTGISVLSVIDFSTIAFPSWI), and 2339–2359 (VFYALIPIALPIVATIIMSII). Asn-2369 is a glycosylation site (N-linked (GlcNAc...) asparagine). 3 helical membrane passes run 2420 to 2440 (AAKFMEDMIPIYVTVLFFVYS), 2489 to 2509 (VGITGLLVWSIGIPLSCFLVL), and 2539 to 2559 (WEMVVFARKFLVIVVSSVALI). The N-linked (GlcNAc...) asparagine glycan is linked to Asn-2565. A helical transmembrane segment spans residues 2569-2589 (VWLAVVIAVIFLIIHLVTQPF). Asn-2602 is a glycosylation site (N-linked (GlcNAc...) asparagine). Helical transmembrane passes span 2607–2627 (IWTITLIVLAMMIGSDFSGSV) and 2632–2652 (LLFVAVLSCMFILEVGVSLMF). Composition is skewed to basic and acidic residues over residues 2827–2838 (FAAKDETPTAEE) and 3049–3069 (QEENARRKLEKEEREEADREI). 2 disordered regions span residues 2827–2847 (FAAKDETPTAEEKTEEQDERL) and 3049–3101 (QEEN…LPEG). A coiled-coil region spans residues 2955–3068 (SEALQKRNRK…KEEREEADRE (114 aa)). Acidic residues predominate over residues 3083-3094 (GEDDTATIDDSS).

In terms of assembly, component of a complex, at least composed of cysteine repeat modular protein A (CRMPa), cysteine repeat modular protein B (CRMPb), micronemal protein 15 (MIC15) and thrombospondin type 1 domain-containing protein (TSP1).

It localises to the cell membrane. The protein resides in the endoplasmic reticulum. Its subcellular location is the golgi apparatus. Functionally, required for triggering rhoptry secretion. Plays a role in host cell invasion. This chain is Cysteine repeat modular protein A, found in Toxoplasma gondii.